Reading from the N-terminus, the 287-residue chain is 2-dehydro-3-deoxyphosphooctonate aldolase (287 aa).

It belongs to the KdsA family.

It localises to the cytoplasm. It carries out the reaction D-arabinose 5-phosphate + phosphoenolpyruvate + H2O = 3-deoxy-alpha-D-manno-2-octulosonate-8-phosphate + phosphate. Its pathway is carbohydrate biosynthesis; 3-deoxy-D-manno-octulosonate biosynthesis; 3-deoxy-D-manno-octulosonate from D-ribulose 5-phosphate: step 2/3. It participates in bacterial outer membrane biogenesis; lipopolysaccharide biosynthesis. In Rhodopseudomonas palustris (strain TIE-1), this protein is 2-dehydro-3-deoxyphosphooctonate aldolase.